Reading from the N-terminus, the 248-residue chain is 3-deoxy-manno-octulosonate cytidylyltransferase 2 (248 aa).

Belongs to the KdsB family.

The protein resides in the cytoplasm. It catalyses the reaction 3-deoxy-alpha-D-manno-oct-2-ulosonate + CTP = CMP-3-deoxy-beta-D-manno-octulosonate + diphosphate. It participates in nucleotide-sugar biosynthesis; CMP-3-deoxy-D-manno-octulosonate biosynthesis; CMP-3-deoxy-D-manno-octulosonate from 3-deoxy-D-manno-octulosonate and CTP: step 1/1. Its pathway is bacterial outer membrane biogenesis; lipopolysaccharide biosynthesis. Functionally, activates KDO (a required 8-carbon sugar) for incorporation into bacterial lipopolysaccharide in Gram-negative bacteria. This chain is 3-deoxy-manno-octulosonate cytidylyltransferase 2, found in Hydrogenovibrio crunogenus (strain DSM 25203 / XCL-2) (Thiomicrospira crunogena).